Here is a 548-residue protein sequence, read N- to C-terminus: Chaperonin GroEL (548 aa).

Residues 30–33 (TLGP), K51, 87–91 (DGTTT), G415, 479–481 (NAA), and D495 contribute to the ATP site.

It belongs to the chaperonin (HSP60) family. As to quaternary structure, forms a cylinder of 14 subunits composed of two heptameric rings stacked back-to-back. Interacts with the co-chaperonin GroES.

Its subcellular location is the cytoplasm. It catalyses the reaction ATP + H2O + a folded polypeptide = ADP + phosphate + an unfolded polypeptide.. In terms of biological role, together with its co-chaperonin GroES, plays an essential role in assisting protein folding. The GroEL-GroES system forms a nano-cage that allows encapsulation of the non-native substrate proteins and provides a physical environment optimized to promote and accelerate protein folding. The polypeptide is Chaperonin GroEL (Pectobacterium carotovorum subsp. carotovorum (strain PC1)).